The primary structure comprises 504 residues: Biotinidase (504 aa).

Residues 1-20 form the signal peptide; the sequence is MFSFGTVFTFALLLIPLTEA. A CN hydrolase domain is found at 30 to 309; the sequence is YEHNLILNPD…GRLLVARVPV (280 aa). Residue Glu79 is the Proton acceptor of the active site. Asn86 and Asn117 each carry an N-linked (GlcNAc...) asparagine glycan. The Proton donor role is filled by Lys181. The active-site Nucleophile is the Cys214. Asn261, Asn365, and Asn375 each carry an N-linked (GlcNAc...) asparagine glycan.

The protein belongs to the carbon-nitrogen hydrolase superfamily. BTD/VNN family.

Its subcellular location is the secreted. The protein resides in the extracellular space. It carries out the reaction biocytin + H2O = biotin + L-lysine. It catalyses the reaction biotin amide + H2O = biotin + NH4(+). In terms of biological role, catalytic release of biotin from biocytin, the product of biotin-dependent carboxylases degradation. The protein is Biotinidase (btd) of Takifugu rubripes (Japanese pufferfish).